A 1256-amino-acid polypeptide reads, in one-letter code: Topoisomerase 1-associated factor 1 (1256 aa).

Over residues 26–38 (GFIVSDEENDNLE) the composition is skewed to acidic residues. Disordered regions lie at residues 26 to 58 (GFIV…VDEY), 695 to 725 (SKKK…RTHA), 1052 to 1121 (SGAE…EAFF), and 1176 to 1256 (SDGV…DEDE). Residues 39 to 53 (NENRNERDPDSRNQD) show a composition bias toward basic and acidic residues. Basic residues predominate over residues 1060 to 1086 (GKARKRGNKSSSTIKKKSLQSRSRRPP). 2 stretches are compositionally biased toward basic and acidic residues: residues 1097 to 1110 (ELRK…FVHD) and 1179 to 1190 (VDTHSHQDDKSQ). A compositionally biased stretch (acidic residues) spans 1194–1204 (SENEDSSEEVS). Low complexity predominate over residues 1222-1231 (DNNVSENYVS).

It belongs to the timeless family. Component of the fork protection complex (FPC) consisting of TOF1 and CSM3.

The protein localises to the nucleus. Its function is as follows. Forms a fork protection complex (FPC) with CSM3 and which is required for chromosome segregation during meiosis and DNA damage repair. FPC coordinates leading and lagging strand synthesis and moves with the replication fork. FPC stabilizes replication forks in a configuration that is recognized by replication checkpoint sensors. The protein is Topoisomerase 1-associated factor 1 (TOF1) of Scheffersomyces stipitis (strain ATCC 58785 / CBS 6054 / NBRC 10063 / NRRL Y-11545) (Yeast).